Reading from the N-terminus, the 177-residue chain is Archaemetzincin (177 aa).

Residue His-129 coordinates Zn(2+). Glu-130 serves as the catalytic Proton acceptor. Residues His-133, His-139, Cys-140, Cys-145, Cys-164, and Cys-167 each contribute to the Zn(2+) site.

It belongs to the peptidase M54 family. Monomer. Zn(2+) serves as cofactor.

Its function is as follows. Probable zinc metalloprotease whose natural substrate is unknown. The protein is Archaemetzincin of Sulfolobus acidocaldarius (strain ATCC 33909 / DSM 639 / JCM 8929 / NBRC 15157 / NCIMB 11770).